A 340-amino-acid chain; its full sequence is tRNA N6-adenosine threonylcarbamoyltransferase (340 aa).

Fe cation is bound by residues His-111 and His-115. Substrate is bound by residues 134–138 (IISGA), Asp-167, Gly-180, and Asn-273. Position 301 (Asp-301) interacts with Fe cation.

The protein belongs to the KAE1 / TsaD family. It depends on Fe(2+) as a cofactor.

The protein localises to the cytoplasm. It carries out the reaction L-threonylcarbamoyladenylate + adenosine(37) in tRNA = N(6)-L-threonylcarbamoyladenosine(37) in tRNA + AMP + H(+). Functionally, required for the formation of a threonylcarbamoyl group on adenosine at position 37 (t(6)A37) in tRNAs that read codons beginning with adenine. Is involved in the transfer of the threonylcarbamoyl moiety of threonylcarbamoyl-AMP (TC-AMP) to the N6 group of A37, together with TsaE and TsaB. TsaD likely plays a direct catalytic role in this reaction. The chain is tRNA N6-adenosine threonylcarbamoyltransferase from Wigglesworthia glossinidia brevipalpis.